A 149-amino-acid polypeptide reads, in one-letter code: Nucleoside diphosphate kinase (149 aa).

ATP-binding residues include K11, F59, R87, T93, R104, and N114. H117 acts as the Pros-phosphohistidine intermediate in catalysis.

Belongs to the NDK family. As to quaternary structure, homotetramer. The cofactor is Mg(2+).

It localises to the cytoplasm. The enzyme catalyses a 2'-deoxyribonucleoside 5'-diphosphate + ATP = a 2'-deoxyribonucleoside 5'-triphosphate + ADP. It catalyses the reaction a ribonucleoside 5'-diphosphate + ATP = a ribonucleoside 5'-triphosphate + ADP. Major role in the synthesis of nucleoside triphosphates other than ATP. The ATP gamma phosphate is transferred to the NDP beta phosphate via a ping-pong mechanism, using a phosphorylated active-site intermediate. The polypeptide is Nucleoside diphosphate kinase (Treponema pallidum (strain Nichols)).